The chain runs to 554 residues: Solute carrier family 22 member 2 (554 aa).

Over 1–21 (MPTVDDILEQVGHFHFFQKQT) the chain is Cytoplasmic. The chain crosses the membrane as a helical span at residues 22-42 (FFLLALISAAFTPIYVGIVFL). Topologically, residues 43–149 (GFTPDHRCRS…LVCARSWMLD (107 aa)) are extracellular. N-linked (GlcNAc...) asparagine glycosylation is present at Asn71. Residues 150 to 170 (LFQSAVNIGFFIGSVGIGYLA) traverse the membrane as a helical segment. The Cytoplasmic portion of the chain corresponds to 171-176 (DRFGRK). A helical membrane pass occupies residues 177 to 197 (LCLLVTILINAAAGVLMAVSP). A glycan (N-linked (GlcNAc...) asparagine) is linked at Asn198. Topologically, residues 198-209 (NYTWMLIFRLIQ) are extracellular. The helical transmembrane segment at 210–230 (GLVSKAGWLIGYILITEFVGL) threads the bilayer. Residues 231-237 (NYRRTVG) are Cytoplasmic-facing. The chain crosses the membrane as a helical span at residues 238-258 (ILYQVAFTVGLLVLAGVAYAL). Topologically, residues 259-262 (PRWR) are extracellular. Residues 263 to 283 (WLQLTVTLPYFCFLLYYWCIP) traverse the membrane as a helical segment. Residues 283-287 (PESPR) carry the Proline-rich sequence motif. At 284 to 348 (ESPRWLISQN…RTPQIRKHTC (65 aa)) the chain is on the cytoplasmic side. Residues 349–369 (ILMYNWFTSSVLYQGLIMHLG) form a helical membrane-spanning segment. At 370-374 (LAGGD) the chain is on the extracellular side. A helical transmembrane segment spans residues 375-395 (IYLDFFYSALVEFPAAFLIIA). At 396-403 (TIDRVGRR) the chain is on the cytoplasmic side. Residues 404–424 (YPWAVSNMVAGAACLASVFVP) form a helical membrane-spanning segment. Over 425-427 (DDL) the chain is Extracellular. The chain crosses the membrane as a helical span at residues 428 to 450 (QGLRITVACLGRMGITMAYEMVC). At 451-463 (LVNAELYPTFIRN) the chain is on the cytoplasmic side. The chain crosses the membrane as a helical span at residues 464–484 (LGVLVCSSLCDVGGIVTPFLV). Topologically, residues 485–493 (YRLTAIWLQ) are extracellular. A helical membrane pass occupies residues 494 to 514 (LPLVVFAVVGLVAGGLVLMLP). Residues 515–554 (ETKGRTLPETIEEAENLQRPRKNREKVIYVHVRKADGPLT) lie on the Cytoplasmic side of the membrane.

The protein belongs to the major facilitator (TC 2.A.1) superfamily. Organic cation transporter (TC 2.A.1.19) family. Tyrosine phosphorylated. As to expression, expressed in kidney.

It is found in the basolateral cell membrane. The protein resides in the basal cell membrane. The catalysed reaction is (R)-noradrenaline(out) = (R)-noradrenaline(in). The enzyme catalyses (R)-adrenaline(out) = (R)-adrenaline(in). It catalyses the reaction serotonin(out) = serotonin(in). It carries out the reaction dopamine(out) = dopamine(in). The catalysed reaction is histamine(out) = histamine(in). The enzyme catalyses thiamine(in) = thiamine(out). It catalyses the reaction creatinine(in) = creatinine(out). It carries out the reaction 1-methylnicotinamide(out) = 1-methylnicotinamide(in). The catalysed reaction is guanidine(out) = guanidine(in). The enzyme catalyses choline(out) = choline(in). It catalyses the reaction agmatine(out) = agmatine(in). It carries out the reaction putrescine(out) = putrescine(in). The catalysed reaction is spermidine(in) = spermidine(out). The enzyme catalyses tyramine(in) = tyramine(out). It catalyses the reaction L-histidyl-L-proline diketopiperazine(in) = L-histidyl-L-proline diketopiperazine(out). It carries out the reaction (R)-salsolinol(in) = (R)-salsolinol(out). The catalysed reaction is N-methyl-(R)-salsolinol(in) = N-methyl-(R)-salsolinol(out). The enzyme catalyses acetylcholine(in) = acetylcholine(out). It catalyses the reaction prostaglandin F2alpha(out) = prostaglandin F2alpha(in). It carries out the reaction prostaglandin E2(out) = prostaglandin E2(in). Tyrosine phosphorylation of the transporter leads to activation of the transport activity. Inhibited by cGMP, most likely through a cGMP-binding protein that interacts with OCT2. Its function is as follows. Electrogenic voltage-dependent transporter that mediates the transport of a variety of organic cations such as endogenous bioactive amines, cationic drugs and xenobiotics. Functions as a Na(+)-independent, bidirectional uniporter. Cation cellular uptake or release is driven by the electrochemical potential, i.e. membrane potential and concentration gradient. However, may also engage electroneutral cation exchange when saturating concentrations of cation substrates are reached. Predominantly expressed at the basolateral membrane of hepatocytes and proximal tubules and involved in the uptake and disposition of cationic compounds by hepatic and renal clearance from the blood flow. Implicated in monoamine neurotransmitters uptake such as histamine, dopamine, adrenaline/epinephrine, noradrenaline/norepinephrine, serotonin and tyramine, thereby supporting a physiological role in the central nervous system by regulating interstitial concentrations of neurotransmitters. Also capable of transporting dopaminergic neuromodulators cyclo(his-pro), salsolinol and N-methyl-salsolinol, thereby involved in the maintenance of dopaminergic cell integrity in the central nervous system. Mediates the bidirectional transport of acetylcholine (ACh) at the apical membrane of ciliated cell in airway epithelium, thereby playing a role in luminal release of ACh from bronchial epithelium. Also transports guanidine and endogenous monoamines such as vitamin B1/thiamine, creatinine and N-1-methylnicotinamide (NMN). Mediates the uptake and efflux of quaternary ammonium compound choline. Mediates the bidirectional transport of polyamine agmatine and the uptake of polyamines putrescine and spermidine. Able to transport non-amine endogenous compounds such as prostaglandin E2 (PGE2) and prostaglandin F2-alpha (PGF2-alpha). Also involved in the uptake of xenobiotic 4-(4-(dimethylamino)styryl)-N-methylpyridinium (ASP). May contribute to regulate the transport of organic compounds in testis across the blood-testis-barrier. The sequence is that of Solute carrier family 22 member 2 (SLC22A2) from Oryctolagus cuniculus (Rabbit).